A 358-amino-acid polypeptide reads, in one-letter code: Photosystem II protein D1 (358 aa).

3 helical membrane passes run 28–45 (YVGWFGVLMVPTLLAAAI), 117–132 (HFLIGICCWLGRQWEL), and 141–155 (WICVAYSAPLSAAFA). His117 contributes to the chlorophyll a binding site. Trp125 is a pheophytin a binding site. Residues Asp169 and Glu188 each coordinate [CaMn4O5] cluster. A helical membrane pass occupies residues 196–217 (FHMIGVAGMFGGSLFSAMHGSL). His197 lines the chlorophyll a pocket. A quinone contacts are provided by residues His214 and 263 to 264 (SF). Residue His214 participates in Fe cation binding. His271 provides a ligand contact to Fe cation. A helical membrane pass occupies residues 273-287 (FLAAWPVICIWITSL). [CaMn4O5] cluster is bound by residues His331, Glu332, Asp341, and Ala343. Positions 344–358 (AAESTPVALIAPAIG) are excised as a propeptide.

Belongs to the reaction center PufL/M/PsbA/D family. As to quaternary structure, PSII is composed of 1 copy each of membrane proteins PsbA, PsbB, PsbC, PsbD, PsbE, PsbF, PsbH, PsbI, PsbJ, PsbK, PsbL, PsbM, PsbT, PsbX, PsbY, Psb30/Ycf12, peripheral proteins PsbO, CyanoQ (PsbQ), PsbU, PsbV and a large number of cofactors. It forms dimeric complexes. The D1/D2 heterodimer binds P680, chlorophylls that are the primary electron donor of PSII, and subsequent electron acceptors. It shares a non-heme iron and each subunit binds pheophytin, quinone, additional chlorophylls, carotenoids and lipids. D1 provides most of the ligands for the Mn4-Ca-O5 cluster of the oxygen-evolving complex (OEC). There is also a Cl(-1) ion associated with D1 and D2, which is required for oxygen evolution. The PSII complex binds additional chlorophylls, carotenoids and specific lipids. is required as a cofactor. In terms of processing, tyr-160 forms a radical intermediate that is referred to as redox-active TyrZ, YZ or Y-Z. C-terminally processed by CtpA; processing is essential to allow assembly of the oxygen-evolving complex and thus photosynthetic growth.

The protein resides in the cellular thylakoid membrane. It catalyses the reaction 2 a plastoquinone + 4 hnu + 2 H2O = 2 a plastoquinol + O2. Its function is as follows. Photosystem II (PSII) is a light-driven water:plastoquinone oxidoreductase that uses light energy to abstract electrons from H(2)O, generating O(2) and a proton gradient subsequently used for ATP formation. It consists of a core antenna complex that captures photons, and an electron transfer chain that converts photonic excitation into a charge separation. The D1/D2 (PsbA/PsbD) reaction center heterodimer binds P680, the primary electron donor of PSII as well as several subsequent electron acceptors. The protein is Photosystem II protein D1 of Prochlorococcus marinus (strain MIT 9313).